A 177-amino-acid chain; its full sequence is MKNNTQPQSSFKKLCRKLSPKREDSAGEIQQHNSSNGEDKNRELEAVFSYMDANRDGRISPEELQKSFMTLGEQLSDEEAVAAVRLSDTDGDGMLDFEEFSQLIKVDDEEEKKMELKGAFRLYIAEGEDCITPRSLKMMLKKLGESRTTDDCRVMISAFDLNADGVLSFDEFALMMR.

A compositionally biased stretch (polar residues) spans 1–11; sequence MKNNTQPQSSF. The segment at 1–44 is disordered; sequence MKNNTQPQSSFKKLCRKLSPKREDSAGEIQQHNSSNGEDKNREL. 4 EF-hand domains span residues 39 to 74, 75 to 110, 111 to 146, and 147 to 177; these read DKNR…LGEQ, LSDE…DDEE, EKKM…LGES, and RTTD…LMMR. Residues aspartate 52, asparagine 54, aspartate 56, arginine 58, glutamate 63, aspartate 88, aspartate 90, aspartate 92, methionine 94, and glutamate 99 each coordinate Ca(2+). Positions 160, 162, 164, and 171 each coordinate Ca(2+).

Binds to ABCG36. In terms of tissue distribution, expressed in cotyledons and guard cells of young leaves. In mature root, expressed in the epidermis, trichoblasts, young lateral root and root tip. Expressed from stage 9 to 15 of flower development in anther wall.

Potential calcium sensor that binds calcium in vitro. The chain is Calcium-binding protein CML38 from Arabidopsis thaliana (Mouse-ear cress).